The sequence spans 1249 residues: Minor capsid protein M1249L (1249 aa).

This sequence belongs to the asfivirus M1249L family. As to quaternary structure, interacts with the minor capsid protein p17 and with the hexon capsid protein p72 capsomers; these interactions form a rigid zipper structure that stabilizes the capsomers. Interacts with host IRF3.

The protein localises to the virion. Its subcellular location is the host cytoplasm. In terms of biological role, together with the penton and the other minor capsid proteins (p17, p49), forms a complicated network immediately below the outer capsid shell, stabilizing the whole capsid. In addition, blocks IFN-beta transactivation mediated by the cGAS-STING pathway and regulates the transcriptional activity of IFN-beta. Mechanistically, suppresses the phosphorylation of host key adapter protein TBK1 and degrades host IRF3 in the cytoplasm. This chain is Minor capsid protein M1249L, found in African swine fever virus (isolate Tick/Malawi/Lil 20-1/1983) (ASFV).